Reading from the N-terminus, the 193-residue chain is Dual-action ribosomal maturation protein DarP (193 aa).

Positions 1–10 (MRGRDEDTGE) are enriched in basic and acidic residues. 2 disordered regions span residues 1-20 (MRGR…SQQR) and 170-193 (SQKP…ENDE). Acidic residues predominate over residues 181 to 193 (GLEDEESASENDE).

It belongs to the DarP family.

It is found in the cytoplasm. Functionally, member of a network of 50S ribosomal subunit biogenesis factors which assembles along the 30S-50S interface, preventing incorrect 23S rRNA structures from forming. Promotes peptidyl transferase center (PTC) maturation. The polypeptide is Dual-action ribosomal maturation protein DarP (Xanthomonas campestris pv. campestris (strain 8004)).